The following is a 489-amino-acid chain: MPAMRLHELLARTGLDTRNLPDIDIAGLSTDSRQVQPGDLFIGLPGTRVDGSEFWPQAIAGGAAGLVISENARGVEAAVPVIRVPDVVGTCARLASAYYDFPARKLTLAGVTGTNGKTTTTHLIENLLQAQAPTGLVGTLYSRWPGQSQEARHTTPFALEIQKLLAQMVEAGCQYGVMEVSSHALAQQRVAGCRFEAAVFTNLTQDHLDFHPDMESYFQAKATLFSPEYRSGRAVINADDPWGVRLAAAYDQVWTYSFQPGADIYPEDAVFTPEGIRGTLVTPVGRAAFTSPLVGQFNLANLLAAVGATLALGIDLEAIAAGLSGFGGVPGRMERVSGSDDDIAVIVDYAHTPDGLRKLLEATRPFVRGRLICVFGCGGDRDRTKRPQMGRIAAELSDLPVVTSDNPRTENPEAILDDILAGIPVGVSPTVEVDRRRAILQALLEAKAGDCVVIAGKGHEDYQILGTTKIHFDDREQAREALSKRRSRG.

S32 contacts UDP-N-acetyl-alpha-D-muramoyl-L-alanyl-D-glutamate. 113 to 119 serves as a coordination point for ATP; sequence GTNGKTT. UDP-N-acetyl-alpha-D-muramoyl-L-alanyl-D-glutamate is bound by residues 154-155, S181, Q187, and R189; that span reads TT. N6-carboxylysine is present on K221. Meso-2,6-diaminopimelate-binding positions include R381, 405–408, G456, and E460; that span reads DNPR. Positions 405-408 match the Meso-diaminopimelate recognition motif motif; that stretch reads DNPR.

This sequence belongs to the MurCDEF family. MurE subfamily. Mg(2+) serves as cofactor. In terms of processing, carboxylation is probably crucial for Mg(2+) binding and, consequently, for the gamma-phosphate positioning of ATP.

It localises to the cytoplasm. The catalysed reaction is UDP-N-acetyl-alpha-D-muramoyl-L-alanyl-D-glutamate + meso-2,6-diaminopimelate + ATP = UDP-N-acetyl-alpha-D-muramoyl-L-alanyl-gamma-D-glutamyl-meso-2,6-diaminopimelate + ADP + phosphate + H(+). Its pathway is cell wall biogenesis; peptidoglycan biosynthesis. Catalyzes the addition of meso-diaminopimelic acid to the nucleotide precursor UDP-N-acetylmuramoyl-L-alanyl-D-glutamate (UMAG) in the biosynthesis of bacterial cell-wall peptidoglycan. This Gloeobacter violaceus (strain ATCC 29082 / PCC 7421) protein is UDP-N-acetylmuramoyl-L-alanyl-D-glutamate--2,6-diaminopimelate ligase.